The following is a 284-amino-acid chain: uncharacterized protein (284 aa).

Gln-54 serves as a coordination point for FMN. The active-site Proton donor is the Cys-83. Residues Lys-125, His-153, 183–185 (NGG), and 207–208 (AN) each bind FMN.

Belongs to the Dus family. It depends on FMN as a cofactor.

Functionally, catalyzes the synthesis of dihydrouridine, a modified base found in the D-loop of most tRNAs. This is an uncharacterized protein from Caenorhabditis elegans.